Consider the following 131-residue polypeptide: Gem-associated protein 7 (131 aa).

N-acetylmethionine is present on methionine 1. The SUZ-C domain maps to 1–29 (MQTPVNIPVPVLRLPRGPDGFSRGFAPDG). Position 3 is a phosphothreonine (threonine 3). In terms of domain architecture, Sm spans 65 to 131 (RYLRSLLAMV…SDIISYTFKP (67 aa)).

It belongs to the gemin-7 family. As to quaternary structure, part of the core SMN complex that contains SMN1, GEMIN2/SIP1, DDX20/GEMIN3, GEMIN4, GEMIN5, GEMIN6, GEMIN7, GEMIN8 and STRAP/UNRIP. Part of the SMN-Sm complex that contains SMN1, GEMIN2/SIP1, DDX20/GEMIN3, GEMIN4, GEMIN5, GEMIN6, GEMIN7, GEMIN8, STRAP/UNRIP and the Sm proteins SNRPB, SNRPD1, SNRPD2, SNRPD3, SNRPE, SNRPF and SNRPG. Interacts with GEMIN6; the interaction is direct. Interacts with STRAP/UNRIP; the interaction is direct. Interacts with GEMIN8; the interaction is direct. Interacts with SNRPB, SNRPD2, SNRPD3 and SNRPE; the interaction is direct.

It is found in the nucleus. The protein resides in the nucleoplasm. It localises to the gem. The protein localises to the cytoplasm. In terms of biological role, the SMN complex catalyzes the assembly of small nuclear ribonucleoproteins (snRNPs), the building blocks of the spliceosome, and thereby plays an important role in the splicing of cellular pre-mRNAs. Most spliceosomal snRNPs contain a common set of Sm proteins SNRPB, SNRPD1, SNRPD2, SNRPD3, SNRPE, SNRPF and SNRPG that assemble in a heptameric protein ring on the Sm site of the small nuclear RNA to form the core snRNP (Sm core). In the cytosol, the Sm proteins SNRPD1, SNRPD2, SNRPE, SNRPF and SNRPG are trapped in an inactive 6S pICln-Sm complex by the chaperone CLNS1A that controls the assembly of the core snRNP. To assemble core snRNPs, the SMN complex accepts the trapped 5Sm proteins from CLNS1A forming an intermediate. Binding of snRNA inside 5Sm triggers eviction of the SMN complex, thereby allowing binding of SNRPD3 and SNRPB to complete assembly of the core snRNP. The protein is Gem-associated protein 7 (GEMIN7) of Homo sapiens (Human).